Here is a 261-residue protein sequence, read N- to C-terminus: MDWKSMLRTGVHKPGALTAGLSVFLTLVYVLNWVFPINEKILLDPGALRKLQLTRLSLYPLAHLSIFHLLLNLMSLFVPLSMFEASHGTVFTGITLNLLAIVTGVVYCLVGMLLYPNVYVGGASGWCFTLCGYFAVQEAGFRPHYELASLKMPTLYIPLVFLVLVTLLMPGSSFVGHLIGLGLGYLIGFRERWLQMATPPGWLIVKIETWLDRWISMIPSVVKYHRESSVDRTAGYTPLYQESELPLHNDNFPGQGRVLGP.

Helical transmembrane passes span 17-37 (LTAG…VFPI), 58-78 (LYPL…SLFV), 94-114 (ITLN…GMLL), 116-136 (PNVY…YFAV), and 155-175 (LYIP…SSFV). The Nucleophile role is filled by serine 124. Histidine 177 is a catalytic residue.

Belongs to the peptidase S54 family.

The protein localises to the golgi apparatus membrane. Its subcellular location is the golgi apparatus. It localises to the cis-Golgi network membrane. It catalyses the reaction Cleaves type-1 transmembrane domains using a catalytic dyad composed of serine and histidine that are contributed by different transmembrane domains.. In terms of biological role, probable rhomboid-type serine protease that catalyzes intramembrane proteolysis. The polypeptide is Rhomboid-type serine protease 2 (RBD2) (Eremothecium gossypii (strain ATCC 10895 / CBS 109.51 / FGSC 9923 / NRRL Y-1056) (Yeast)).